A 121-amino-acid polypeptide reads, in one-letter code: Ribosome-binding factor A (121 aa).

This sequence belongs to the RbfA family. Monomer. Binds 30S ribosomal subunits, but not 50S ribosomal subunits or 70S ribosomes.

The protein localises to the cytoplasm. Functionally, one of several proteins that assist in the late maturation steps of the functional core of the 30S ribosomal subunit. Associates with free 30S ribosomal subunits (but not with 30S subunits that are part of 70S ribosomes or polysomes). Required for efficient processing of 16S rRNA. May interact with the 5'-terminal helix region of 16S rRNA. In Clostridium kluyveri (strain NBRC 12016), this protein is Ribosome-binding factor A.